The chain runs to 64 residues: Prokaryotic ubiquitin-like protein Pup (64 aa).

A disordered region spans residues 1–37 (MAQEQTKRGGGGGEDDDLTGSTAAGQERREKLTDETD). An ARC ATPase binding region spans residues 21 to 58 (STAAGQERREKLTDETDDLLDEIDDVLEENAEDFVRAY). Residues 23-52 (AAGQERREKLTDETDDLLDEIDDVLEENAE) adopt a coiled-coil conformation. Glutamine 64 is modified (deamidated glutamine). Residue glutamine 64 forms an Isoglutamyl lysine isopeptide (Gln-Lys) (interchain with K-? in acceptor proteins) linkage.

The protein belongs to the prokaryotic ubiquitin-like protein family. In terms of assembly, strongly interacts with the proteasome-associated ATPase ARC through a hydrophobic interface; the interacting region of Pup lies in its C-terminal half. There is one Pup binding site per ARC hexamer ring. Post-translationally, is modified by deamidation of its C-terminal glutamine to glutamate by the deamidase Dop, a prerequisite to the subsequent pupylation process.

The protein operates within protein degradation; proteasomal Pup-dependent pathway. Functionally, protein modifier that is covalently attached to lysine residues of substrate proteins, thereby targeting them for proteasomal degradation. The tagging system is termed pupylation. The chain is Prokaryotic ubiquitin-like protein Pup from Mycolicibacterium vanbaalenii (strain DSM 7251 / JCM 13017 / BCRC 16820 / KCTC 9966 / NRRL B-24157 / PYR-1) (Mycobacterium vanbaalenii).